The following is a 121-amino-acid chain: Small ribosomal subunit protein uS13 (121 aa).

The disordered stretch occupies residues 96 to 121; sequence PVRGQNTKNNARTRKGKAVAIAGKKK. Over residues 106-121 the composition is skewed to basic residues; sequence ARTRKGKAVAIAGKKK.

This sequence belongs to the universal ribosomal protein uS13 family. In terms of assembly, part of the 30S ribosomal subunit. Forms a loose heterodimer with protein S19. Forms two bridges to the 50S subunit in the 70S ribosome.

Its function is as follows. Located at the top of the head of the 30S subunit, it contacts several helices of the 16S rRNA. In the 70S ribosome it contacts the 23S rRNA (bridge B1a) and protein L5 of the 50S subunit (bridge B1b), connecting the 2 subunits; these bridges are implicated in subunit movement. Contacts the tRNAs in the A and P-sites. This chain is Small ribosomal subunit protein uS13, found in Streptococcus agalactiae serotype Ia (strain ATCC 27591 / A909 / CDC SS700).